A 507-amino-acid chain; its full sequence is Cytochrome c-type protein ImcH (507 aa).

3 helical membrane passes run 14–34 (ISLI…AFIA), 45–65 (YIGL…LILV), and 100–120 (LFIF…VASI). Residues C132, C136, M140, H152, C157, C160, H161, D400, C449, C452, H453, C487, C490, H491, and E496 each contribute to the heme site.

The protein belongs to the NapC/NirT/NrfH family. Post-translationally, binds 4 heme c groups covalently per subunit.

Its subcellular location is the cell inner membrane. Redox protein involved in a high-potential metal respiratory pathway. Is required only for electron transfer to terminal extracellular electron acceptors with redox potentials higher than -0.1 V. ImcH likely transfers electrons from the quinone pool to a periplasmic acceptor. In Geobacter sulfurreducens (strain ATCC 51573 / DSM 12127 / PCA), this protein is Cytochrome c-type protein ImcH.